Here is a 2185-residue protein sequence, read N- to C-terminus: MGAQVSTQKTGAHETGLNASGNSIIHYTNINYYKDAASNSANRQDFTQDPSKFTEPVKDIMIKSLPALNSPTVEECGYSDRVRSITLGNSTITTQECANVVVGYGVWPDYLKDSEATAEDQPTQPDVATCRFYTLDSVQWQKTSPGWWWKLPDALSNLGLFGQNMQYHYLGRTGYTIHVQCNASKFHQGCLLVVCVPEAEMGCATLNNTPSSAELLGGDSAKEFADKPVASGSNKLVQRVVYNAGMGVGVGNLTIFPHQWINLRTNNSATIVMPYTNSVPMDNMFRHNNVTLMVIPFVPLDYCPGSTTYVPITITIAPMCAEYNGLRLAGHQGLPTMNTPGSCQFLTSDDFQSPSAMPQYDVTPEMRIPGEVKNLMEIAEVDSVVPVQNVGEKVNSMEAYQIPVRSNEGSGTQVFGFPLQPGYSSVFSRTLLGEILNYYTHWSGSIKLTFMFCGSAMATGKFLLAYSPPGAGAPTKRVDAMLGTHVVWDVGLQSSCVLCIPWISQTHYRYVASDEYTAGGFITCWYQTNIVVPADAQSSCYIMCFVSACNDFSVRLLKDTPFISQQNFFQGPVEDAITAAIGRVADTVGTGPTNSEAIPALTAAETGHTSQVVPSDTMQTRHVKNYHSRSESTIENFLCRSACVYFTEYENSGAKRYAEWVITPRQAAQLRRKLEFFTYVRFDLELTFVITSTQQPSTTQNQDAQILTHQIMYVPPGGPVPDKVDSYVWQTSTNPSVFWTEGNAPPRMSVPFLSIGNAYSNFYDGWSEFSRNGVYGINTLNNMGTLYARHVNAGSTGPIKSTIRIYFKPKHVKAWIPRPPRLCQYEKAKNVNFQPSGVTTTRQSITTMTNTGAFGQQSGAVYVGNYRVVNRHLATSADWQNCVWENYNRDLLVSTTTAHGCDIIARCRCTTGVYFCASKNKHYPISFEGPGIVEVQESEYYPRRYQSHVLLAAGFSEPGDCGGILRCEHGVIGIVTMGGEGVVGFADIRDLLWLEDDAMEQGVKDYVEQLGNAFGSGFTNQICEQVNLLKESLVGQDSILEKSLKALVKIISALVIVVRNHDDLITVTATLALIGCTSSPWRWLKQKVSQYYGIPMAERQNNGWLKKFTEMTNACKGMEWIAIKIQKFIEWLKVKILPEVREKHEFLNRLKQLPLLESQIATIEQSAPSQSDQEQLFSNVQYFAHYCRKYAPLYASEAKRVFSLEKKMSNYIQFKSKCRIEPVCLLLHGSPGAGKSVATNLIGRSLAEKLNSSVYSLPPDPDHFDGYKQQAVVIMDDLCQKPDGKDVSLFCQMVSSVDFVPPMAALEEKGILFTSPFVLASTNAGSINAPTVSDSRALARRFHFDMNIEVISMYSQNGKINMPMSVKTCDEECCPVNFKKCCPLVCGKAIQFIDRRTQVRYSLDMLVTEMFREYNHRHSVGATLEALFQGPPVYREIKISVAPETPPPPRIADLLKSVDSEAVREYCKEKGWLVPEVNSTLQIEKHVSRAFICLQAITTFVSVAGIIYIIYKLFAGFQGAYTGIPNQKPKVPTLRQAKVQGPAFEFAVAMMKRNSSTVKTEYGEFTMLGIYDRWAVLPRHAKPGPTILMNDQEVGVLDAKELVDKDGTNLELTLLKLNRNEKFRDIRGFLAKEEVEVNEAVLAINTSKFPNMYIPVGQVTDYGFLNLGGTPTKRMLMYNFPTRAGQCGGVLMSTGKVLGIHVGGNGHQGFSAALLKHYFNDEQGEIEFIESSKEAGFPIINTPSKTKLEPSVFHQVFEGDKEPAVLRNGDPRLKVNFEEAIFSKYIGNVNTHVDEYMMEAVDHYAGQLATLDISTEPMKLEDAVYGTEGLEALDLTTSAGYPYVALGIKKRDILSKKTRDLTKLKECMDKYGLNLPMVTYVKDELRSAEKVAKGKSRLIEASSLNDSVAMRQTFGNLYKTFHLNPGVVTGSAVGCDPDLFWSKIPVMLDGHLIAFDYSGYDASLSPVWFACLKLLLEKLGYSHKETNYIDYLCNSHHLYRDKHYFVRGGMPSGCSGTSIFNSMINNIIIRTLMLKVYKGIDLDQFRMIAYGDDVIASYPWPIDASLLAEAGKDYGLIMTPADKGECFNEVTWTNVTFLKRYFRADEQYPFLVHPVMPMKDIHESIRWTKDPKNTQDHVRSLCLLAWHNGEHEYEEFIRKIRSVPVGRCLTLPAFSTIRRKWLDSF.

Glycine 2 carries N-myristoyl glycine; by host lipidation. Residues 2-1495 (GAQVSTQKTG…HVSRAFICLQ (1494 aa)) lie on the Cytoplasmic side of the membrane. An amphipathic alpha-helix region spans residues 568 to 584 (FFQGPVEDAITAAIGRV). Catalysis depends on for protease 2A activity residues histidine 872 and aspartate 890. Cysteine 907 and cysteine 909 together coordinate Zn(2+). Cysteine 961 (for protease 2A activity) is an active-site residue. Zn(2+) contacts are provided by cysteine 967 and histidine 969. The segment at 1101 to 1173 (NNGWLKKFTE…EQSAPSQSDQ (73 aa)) is membrane-binding. The segment at 1101-1239 (NNGWLKKFTE…SPGAGKSVAT (139 aa)) is oligomerization. The interval 1122–1126 (AIKIQ) is RNA-binding. Residues 1205-1361 (EKKMSNYIQF…SMYSQNGKIN (157 aa)) form the SF3 helicase domain. Positions 1369, 1381, and 1386 each coordinate Zn(2+). Residues 1369 to 1386 (CDEECCPVNFKKCCPLVC) form a C4-type; degenerate zinc finger. Residues 1413–1420 (EYNHRHSV) are RNA-binding. The tract at residues 1424-1429 (LEALFQ) is oligomerization. Residues 1496-1511 (AITTFVSVAGIIYIIY) lie within the membrane without spanning it. Residues 1512-2185 (KLFAGFQGAY…TIRRKWLDSF (674 aa)) lie on the Cytoplasmic side of the membrane. At tyrosine 1521 the chain carries O-(5'-phospho-RNA)-tyrosine. A Peptidase C3 domain is found at 1541-1719 (GPAFEFAVAM…FSAALLKHYF (179 aa)). Catalysis depends on for protease 3C activity residues histidine 1580, glutamate 1611, and cysteine 1687. The RdRp catalytic domain occupies 1950-2066 (GHLIAFDYSG…SYPWPIDASL (117 aa)). 2 residues coordinate Mg(2+): aspartate 1956 and aspartate 2052.

This sequence belongs to the picornaviruses polyprotein family. In terms of assembly, interacts with capsid protein VP1 and capsid protein VP3 to form heterotrimeric protomers. As to quaternary structure, interacts with capsid protein VP0, and capsid protein VP3 to form heterotrimeric protomers. Five protomers subsequently associate to form pentamers which serve as building blocks for the capsid. Interacts with capsid protein VP2, capsid protein VP3 and capsid protein VP4 following cleavage of capsid protein VP0. Interacts with host CD55. Interacts with host CXADR. Interacts with capsid protein VP1 and capsid protein VP3 in the mature capsid. In terms of assembly, interacts with capsid protein VP0 and capsid protein VP1 to form heterotrimeric protomers. Five protomers subsequently associate to form pentamers which serve as building blocks for the capsid. Interacts with capsid protein VP4 in the mature capsid. Interacts with protein 2C; this interaction may be important for virion morphogenesis. As to quaternary structure, interacts with capsid protein VP1 and capsid protein VP3. Homodimer. In terms of assembly, homohexamer; forms a hexameric ring structure with 6-fold symmetry characteristic of AAA+ ATPases. Interacts (via N-terminus) with host RTN3 (via reticulon domain); this interaction is important for viral replication. Interacts with capsid protein VP3; this interaction may be important for virion morphogenesis. As to quaternary structure, interacts with protein 3CD. Homodimer. Interacts with host GBF1. Interacts (via GOLD domain) with host ACBD3 (via GOLD domain); this interaction allows the formation of a viral protein 3A/ACBD3 heterotetramer with a 2:2 stoichiometry, which will stimulate the recruitment of host PI4KB in order to synthesize PI4P at the viral RNA replication sites. In terms of assembly, interacts with RNA-directed RNA polymerase. As to quaternary structure, interacts with host TICAM1 (via C-terminus). Interacts with protein 3AB and with RNA-directed RNA polymerase. In terms of assembly, interacts with Viral protein genome-linked and with protein 3CD. Requires Mg(2+) as cofactor. Specific enzymatic cleavages in vivo by the viral proteases yield processing intermediates and the mature proteins. Post-translationally, myristoylation is required for the formation of pentamers during virus assembly. Further assembly of 12 pentamers and a molecule of genomic RNA generates the provirion. In terms of processing, during virion maturation, immature virions are rendered infectious following cleavage of VP0 into VP4 and VP2. This maturation seems to be an autocatalytic event triggered by the presence of RNA in the capsid and it is followed by a conformational change infectious virion. Myristoylation is required during RNA encapsidation and formation of the mature virus particle. Post-translationally, VPg is uridylylated by the polymerase into VPg-pUpU. This acts as a nucleotide-peptide primer for the genomic RNA replication.

It localises to the virion. The protein localises to the host cytoplasm. The protein resides in the host cytoplasmic vesicle membrane. It is found in the host nucleus. It carries out the reaction a ribonucleoside 5'-triphosphate + H2O = a ribonucleoside 5'-diphosphate + phosphate + H(+). The catalysed reaction is Selective cleavage of Tyr-|-Gly bond in the picornavirus polyprotein.. It catalyses the reaction RNA(n) + a ribonucleoside 5'-triphosphate = RNA(n+1) + diphosphate. The enzyme catalyses Selective cleavage of Gln-|-Gly bond in the poliovirus polyprotein. In other picornavirus reactions Glu may be substituted for Gln, and Ser or Thr for Gly.. With respect to regulation, replication or transcription is subject to high level of random mutations by the nucleotide analog ribavirin. Forms an icosahedral capsid of pseudo T=3 symmetry with capsid proteins VP2 and VP3. The capsid is 300 Angstroms in diameter, composed of 60 copies of each capsid protein and enclosing the viral positive strand RNA genome. Capsid protein VP1 mainly forms the vertices of the capsid. Capsid protein VP1 interacts with host cell receptors CD55 and CXADR to provide virion attachment to target host cells. This attachment induces virion internalization. Tyrosine kinases are probably involved in the entry process. After binding to its receptor, the capsid undergoes conformational changes. Capsid protein VP1 N-terminus (that contains an amphipathic alpha-helix) and capsid protein VP4 are externalized. Together, they shape a pore in the host membrane through which viral genome is translocated to host cell cytoplasm. Functionally, forms an icosahedral capsid of pseudo T=3 symmetry with capsid proteins VP2 and VP3. The capsid is 300 Angstroms in diameter, composed of 60 copies of each capsid protein and enclosing the viral positive strand RNA genome. Its function is as follows. Lies on the inner surface of the capsid shell. After binding to the host receptor, the capsid undergoes conformational changes. Capsid protein VP4 is released, Capsid protein VP1 N-terminus is externalized, and together, they shape a pore in the host membrane through which the viral genome is translocated into the host cell cytoplasm. In terms of biological role, component of immature procapsids, which is cleaved into capsid proteins VP4 and VP2 after maturation. Allows the capsid to remain inactive before the maturation step. Cysteine protease that cleaves viral polyprotein and specific host proteins. It is responsible for the autocatalytic cleavage between the P1 and P2 regions, which is the first cleavage occurring in the polyprotein. Also cleaves the host translation initiation factor EIF4G1, in order to shut down the capped cellular mRNA translation. Inhibits the host nucleus-cytoplasm protein and RNA trafficking by cleaving host members of the nuclear pores. Counteracts stress granule formation probably by antagonizing its assembly or promoting its dissassembly. Cleaves and inhibits host IFIH1/MDA5, thereby inhibiting the type-I IFN production and the establishment of the antiviral state. Cleaves and inhibits host MAVS, thereby inhibiting the type-I IFN production and the establishment of the antiviral state. Functionally, plays an essential role in the virus replication cycle by acting as a viroporin. Creates a pore in the host endoplasmic reticulum and as a consequence releases Ca2+ in the cytoplasm of infected cell. In turn, high levels of cytoplasmic calcium may trigger membrane trafficking and transport of viral ER-associated proteins to viroplasms, sites of viral genome replication. Its function is as follows. Induces and associates with structural rearrangements of intracellular membranes. Displays RNA-binding, nucleotide binding and NTPase activities. May play a role in virion morphogenesis and viral RNA encapsidation by interacting with the capsid protein VP3. In terms of biological role, localizes the viral replication complex to the surface of membranous vesicles. Together with protein 3CD binds the Cis-Active RNA Element (CRE) which is involved in RNA synthesis initiation. Acts as a cofactor to stimulate the activity of 3D polymerase, maybe through a nucleid acid chaperone activity. Localizes the viral replication complex to the surface of membranous vesicles. It inhibits host cell endoplasmic reticulum-to-Golgi apparatus transport and causes the disassembly of the Golgi complex, possibly through GBF1 interaction. This would result in depletion of MHC, trail receptors and IFN receptors at the host cell surface. Plays an essential role in viral RNA replication by recruiting ACBD3 and PI4KB at the viral replication sites, thereby allowing the formation of the rearranged membranous structures where viral replication takes place. Functionally, acts as a primer for viral RNA replication and remains covalently bound to viral genomic RNA. VPg is uridylylated prior to priming replication into VPg-pUpU. The oriI viral genomic sequence may act as a template for this. The VPg-pUpU is then used as primer on the genomic RNA poly(A) by the RNA-dependent RNA polymerase to replicate the viral genome. During genome replication, the VPg-RNA linkage is removed by the host TDP2, thereby accelerating replication. During the late stage of the replication cycle, host TDP2 is excluded from sites of viral RNA synthesis and encapsidation, allowing for the generation of progeny virions. Its function is as follows. Involved in the viral replication complex and viral polypeptide maturation. It exhibits protease activity with a specificity and catalytic efficiency that is different from protease 3C. Protein 3CD lacks polymerase activity. Protein 3CD binds to the 5'UTR of the viral genome. In terms of biological role, major viral protease that mediates proteolytic processing of the polyprotein. Cleaves host EIF5B, contributing to host translation shutoff. Also cleaves host PABPC1, contributing to host translation shutoff. Cleaves and inhibits host RIGI, thereby inhibiting the type-I IFN production and the establishment of the antiviral state. Cleaves and inhibits host MAVS, thereby inhibiting the type-I IFN production and the establishment of the antiviral state. Cleaves and inhibits host TICAM1/TRIF, thereby inhibiting the type-I IFN production. Cleaves host NLRP1, triggers host N-glycine-mediated degradation of the autoinhibitory NLRP1 N-terminal fragment. Replicates the viral genomic RNA on the surface of intracellular membranes. May form linear arrays of subunits that propagate along a strong head-to-tail interaction called interface-I. Covalently attaches UMP to a tyrosine of VPg, which is used to prime RNA synthesis. The positive stranded RNA genome is first replicated at virus induced membranous vesicles, creating a dsRNA genomic replication form. This dsRNA is then used as template to synthesize positive stranded RNA genomes. ss(+)RNA genomes are either translated, replicated or encapsidated. This is Genome polyprotein from Homo sapiens (Human).